The chain runs to 633 residues: Probable methyltransferase PMT17 (633 aa).

The Cytoplasmic portion of the chain corresponds to 1 to 18 (MAKENSGHHHQTEARRKK). The chain crosses the membrane as a helical; Signal-anchor for type II membrane protein span at residues 19–39 (LTLILGVSGLCILFYVLGAWQ). The Lumenal portion of the chain corresponds to 40–633 (ANTVPSSISK…NNNNNNNNNN (594 aa)). The tract at residues 50-71 (LGCETQSNPSSSSSSSSSSESA) is disordered. Low complexity predominate over residues 59-70 (SSSSSSSSSSES). Residue Asn-87 is glycosylated (N-linked (GlcNAc...) asparagine).

Belongs to the methyltransferase superfamily.

The protein resides in the endoplasmic reticulum membrane. This is Probable methyltransferase PMT17 from Arabidopsis thaliana (Mouse-ear cress).